A 314-amino-acid polypeptide reads, in one-letter code: 3'-5' exoribonuclease YhaM (314 aa).

Residues 163-279 enclose the HD domain; that stretch reads HVVSMLHLAK…LHYIDNLDAK (117 aa).

This sequence belongs to the YhaM family.

In terms of biological role, shows a 3'-5' exoribonuclease activity. In Bacillus pumilus (strain SAFR-032), this protein is 3'-5' exoribonuclease YhaM.